The primary structure comprises 123 residues: Large ribosomal subunit protein bL12 (123 aa).

Belongs to the bacterial ribosomal protein bL12 family. Homodimer. Part of the ribosomal stalk of the 50S ribosomal subunit. Forms a multimeric L10(L12)X complex, where L10 forms an elongated spine to which 2 to 4 L12 dimers bind in a sequential fashion. Binds GTP-bound translation factors.

In terms of biological role, forms part of the ribosomal stalk which helps the ribosome interact with GTP-bound translation factors. Is thus essential for accurate translation. This Cytophaga hutchinsonii (strain ATCC 33406 / DSM 1761 / CIP 103989 / NBRC 15051 / NCIMB 9469 / D465) protein is Large ribosomal subunit protein bL12.